The following is a 338-amino-acid chain: UPF0324 membrane protein TauZ (338 aa).

9 helical membrane passes run 36–55 (YGAP…NFLA), 75–92 (LGVA…LAAL), 96–118 (AIAL…SRLV), 125–147 (ALLT…AAVL), 162–184 (LSVT…LFGF), 223–245 (LIRV…ARGL), 255–277 (PLLP…GLIP), 290–309 (WALL…GKML), and 314–336 (GAIA…GLHL).

It belongs to the UPF0324 family.

The protein localises to the cell membrane. The chain is UPF0324 membrane protein TauZ (tauZ) from Paracoccus pantotrophus (Thiosphaera pantotropha).